The chain runs to 600 residues: MAPGANIHIPPAGPPEPGPLYSDFYQQQIERQRNNNYHSTSLRNMVATSVNRTALHPGGVQPGKGHTELEEELHEHAHIDYDRVAIIANPSVAALYEDALVYETGTAITSSGALTAYSGAKTGRSPSDKRIVKEESSEKEVWWGPVNKPMTPDVWRINRERAVDYLNTRNRIYVIDGFAGWDERYRISVRVVCARAYHALFMRNMLIRPSAEELKHFHPDYVIYNAGSFPANRFTEGMTSATSVAINFAEKEMVILGTEYAGEMKKGVFTILFYEMPVKHNVLTLHSSANEGQNGDVTVFFGLSGTGKTTLSADPKRALIGDDEHCWTDRGVFNIEGGCYAKCIGLSAEKEPDIFNAIRFGSVLENVVFDPISRVVDYDDSTLTENTRCAYPIEYIENAKVPCLSDSHPSNIILLTCDARGVLPPISKLTTEQTMFHFISGYTSKMAGTEDGVTEPQATFSSCFAQPFLALHPMRYARMLADKISQHKANAWLLNTGWVGAGATTGGKRCPLKYTRAILDAIHSGELAKAEYETYDVFNLHVPKSCPGVPDELLNPKNSWTATTSFSDEVNKLAKLFNENFQKYADQATKEVIAAGPVVQ.

Position 302–309 (302–309 (GLSGTGKT)) interacts with ATP.

This sequence belongs to the phosphoenolpyruvate carboxykinase (ATP) family.

The catalysed reaction is oxaloacetate + ATP = phosphoenolpyruvate + ADP + CO2. Its pathway is carbohydrate biosynthesis; gluconeogenesis. The polypeptide is Phosphoenolpyruvate carboxykinase (ATP) (acuF) (Emericella nidulans (strain FGSC A4 / ATCC 38163 / CBS 112.46 / NRRL 194 / M139) (Aspergillus nidulans)).